We begin with the raw amino-acid sequence, 340 residues long: uncharacterized protein (340 aa).

A disordered region spans residues 284 to 340; it reads DHSTPTNYQQETPASQQQLDQENEPIKPSKKSNSSSLPRGTTQPKSNSINRVSKLID. 2 stretches are compositionally biased toward polar residues: residues 286–303 and 320–334; these read STPTNYQQETPASQQQLD and LPRGTTQPKSNSINR.

This is an uncharacterized protein from Mycoplasma genitalium (strain ATCC 33530 / DSM 19775 / NCTC 10195 / G37) (Mycoplasmoides genitalium).